We begin with the raw amino-acid sequence, 286 residues long: Bifunctional protein FolD (286 aa).

Residues Gly-166 to Ser-168 and Ile-232 each bind NADP(+).

This sequence belongs to the tetrahydrofolate dehydrogenase/cyclohydrolase family. In terms of assembly, homodimer.

It catalyses the reaction (6R)-5,10-methylene-5,6,7,8-tetrahydrofolate + NADP(+) = (6R)-5,10-methenyltetrahydrofolate + NADPH. The catalysed reaction is (6R)-5,10-methenyltetrahydrofolate + H2O = (6R)-10-formyltetrahydrofolate + H(+). It participates in one-carbon metabolism; tetrahydrofolate interconversion. Its function is as follows. Catalyzes the oxidation of 5,10-methylenetetrahydrofolate to 5,10-methenyltetrahydrofolate and then the hydrolysis of 5,10-methenyltetrahydrofolate to 10-formyltetrahydrofolate. This Shewanella woodyi (strain ATCC 51908 / MS32) protein is Bifunctional protein FolD.